A 229-amino-acid chain; its full sequence is Putative N-acetylmannosamine-6-phosphate 2-epimerase (229 aa).

The protein belongs to the NanE family.

The enzyme catalyses an N-acyl-D-glucosamine 6-phosphate = an N-acyl-D-mannosamine 6-phosphate. Its pathway is amino-sugar metabolism; N-acetylneuraminate degradation; D-fructose 6-phosphate from N-acetylneuraminate: step 3/5. Functionally, converts N-acetylmannosamine-6-phosphate (ManNAc-6-P) to N-acetylglucosamine-6-phosphate (GlcNAc-6-P). This chain is Putative N-acetylmannosamine-6-phosphate 2-epimerase, found in Escherichia coli O139:H28 (strain E24377A / ETEC).